Consider the following 302-residue polypeptide: MQWLEAGIVFETEDLFAQTAAELVCNIFYDLGLSGVVTEDPVPVSDHGVRGRVIGYLPVDEALEQTRADLEQMASGLSARHPVRCTLEFTPCDDQDWANAWKDHFFVQKIGRNIVVRPTWRDHVPEPGEVVIDLDPGMAFGTGTHPTTAMCLEMVEKHLAPGTAFLDVGTGSGILMIAAQKLGAKTVWGVDNDGVAVKIAAENLERNGIFAGGNACRIMRADLVTGVDRAFDLVTANILSEVIVALADDVGRVVVPGGLLVCSGIIEPKQAMVEAKLTACGFDIIERKTTDLWVCLVARRTP.

Residues threonine 148, glycine 169, aspartate 191, and asparagine 237 each contribute to the S-adenosyl-L-methionine site.

Belongs to the methyltransferase superfamily. PrmA family.

Its subcellular location is the cytoplasm. It catalyses the reaction L-lysyl-[protein] + 3 S-adenosyl-L-methionine = N(6),N(6),N(6)-trimethyl-L-lysyl-[protein] + 3 S-adenosyl-L-homocysteine + 3 H(+). In terms of biological role, methylates ribosomal protein L11. The sequence is that of Ribosomal protein L11 methyltransferase from Desulfosudis oleivorans (strain DSM 6200 / JCM 39069 / Hxd3) (Desulfococcus oleovorans).